Here is a 197-residue protein sequence, read N- to C-terminus: U1 small nuclear ribonucleoprotein C (197 aa).

The Matrin-type zinc finger occupies 4-36 (YYCEYCDIYLTHSSPVGRRQHNQGRKHISAKIE). Residues 128–137 (FHNNKRINNI) are compositionally biased toward low complexity. Residues 128-178 (FHNNKRINNIPKPYNNYTNKPITNSSYKNDKQDYRNNNESNDNMNSNNFSN) are disordered. Over residues 142-154 (NNYTNKPITNSSY) the composition is skewed to polar residues. The segment covering 164–178 (NNESNDNMNSNNFSN) has biased composition (low complexity).

It belongs to the U1 small nuclear ribonucleoprotein C family. As to quaternary structure, U1 snRNP is composed of the 7 core Sm proteins B/B', D1, D2, D3, E, F and G that assemble in a heptameric protein ring on the Sm site of the small nuclear RNA to form the core snRNP, and at least 3 U1 snRNP-specific proteins U1-70K, U1-A and U1-C. U1-C interacts with U1 snRNA and the 5' splice-site region of the pre-mRNA.

It is found in the nucleus. Component of the spliceosomal U1 snRNP, which is essential for recognition of the pre-mRNA 5' splice-site and the subsequent assembly of the spliceosome. U1-C is directly involved in initial 5' splice-site recognition for both constitutive and regulated alternative splicing. The interaction with the 5' splice-site seems to precede base-pairing between the pre-mRNA and the U1 snRNA. Stimulates commitment or early (E) complex formation by stabilizing the base pairing of the 5' end of the U1 snRNA and the 5' splice-site region. In Plasmodium berghei (strain Anka), this protein is U1 small nuclear ribonucleoprotein C (SNRPC).